The chain runs to 169 residues: MIEVAVQAEPDWADGTDWERLAIEAVTAAMRTTPHAAMLDAAYMAEVSIRLTDDDEVHALNRQYRQKDKPTNVLSFPMVQDDLIEGLDNSDDGEVLLGDIILARGVCVREAAEKGVPTAEHATHLIVHGTLHLLGYDHIEDDEAEAMEDLERVALATLGIDDPYAITED.

His-128, His-132, and His-138 together coordinate Zn(2+).

Belongs to the endoribonuclease YbeY family. The cofactor is Zn(2+).

Its subcellular location is the cytoplasm. Single strand-specific metallo-endoribonuclease involved in late-stage 70S ribosome quality control and in maturation of the 3' terminus of the 16S rRNA. This chain is Endoribonuclease YbeY, found in Rhizorhabdus wittichii (strain DSM 6014 / CCUG 31198 / JCM 15750 / NBRC 105917 / EY 4224 / RW1) (Sphingomonas wittichii).